A 1097-amino-acid polypeptide reads, in one-letter code: UPF0746 protein DDB_G0281095 (1097 aa).

A compositionally biased stretch (basic and acidic residues) spans 1 to 11; sequence MVNNNKRKEIE. Positions 1 to 24 are disordered; it reads MVNNNKRKEIENQENDNDDDNDGL. The segment covering 12-22 has biased composition (acidic residues); it reads NQENDNDDDND. One can recognise an SAP domain in the interval 35–69; that stretch reads YDSIRSKELQTIAKSLGLPNNGKKQEVYKRIEGYF. The stretch at 329-521 forms a coiled coil; it reads FKEIREIHQQ…QLILELNEIQ (193 aa).

Belongs to the UPF0746 family.

The protein is UPF0746 protein DDB_G0281095 of Dictyostelium discoideum (Social amoeba).